The chain runs to 211 residues: Large ribosomal subunit protein eL13 (211 aa).

Position 16 is an N6-acetyllysine (Lys-16). Ser-52, Ser-77, and Ser-106 each carry phosphoserine. Residues Lys-123 and Lys-145 each participate in a glycyl lysine isopeptide (Lys-Gly) (interchain with G-Cter in SUMO2) cross-link. A Glycyl lysine isopeptide (Lys-Gly) (interchain with G-Cter in SUMO1); alternate cross-link involves residue Lys-174. Residues Lys-174 and Lys-177 each participate in a glycyl lysine isopeptide (Lys-Gly) (interchain with G-Cter in SUMO2); alternate cross-link. The residue at position 177 (Lys-177) is an N6-acetyllysine; alternate.

It belongs to the eukaryotic ribosomal protein eL13 family. In terms of assembly, component of the large ribosomal subunit.

The protein resides in the cytoplasm. In terms of biological role, component of the large ribosomal subunit. The ribosome is a large ribonucleoprotein complex responsible for the synthesis of proteins in the cell. This is Large ribosomal subunit protein eL13 (Rpl13) from Mus musculus (Mouse).